The sequence spans 390 residues: Homoserine O-succinyltransferase (390 aa).

The 311-residue stretch at 59–369 (NAVLVCHALN…PHGHDAFLLD (311 aa)) folds into the AB hydrolase-1 domain. Ser165 serves as the catalytic Nucleophile. Substrate is bound at residue Arg235. Active-site residues include Asp330 and His363. Asp364 provides a ligand contact to substrate.

This sequence belongs to the AB hydrolase superfamily. MetX family. As to quaternary structure, homodimer.

The protein resides in the cytoplasm. The enzyme catalyses L-homoserine + succinyl-CoA = O-succinyl-L-homoserine + CoA. It participates in amino-acid biosynthesis; L-methionine biosynthesis via de novo pathway; O-succinyl-L-homoserine from L-homoserine: step 1/1. Its function is as follows. Transfers a succinyl group from succinyl-CoA to L-homoserine, forming succinyl-L-homoserine. This Cupriavidus pinatubonensis (strain JMP 134 / LMG 1197) (Cupriavidus necator (strain JMP 134)) protein is Homoserine O-succinyltransferase.